The following is a 795-amino-acid chain: Protein translocase subunit SecA 2 (795 aa).

ATP contacts are provided by residues Gln-84, 102–106 (GEGKT), and Asp-496.

It belongs to the SecA family. Monomer and homodimer. Part of the essential Sec protein translocation apparatus which comprises SecA, SecYEG and auxiliary proteins SecDF. Other proteins may also be involved.

The protein localises to the cell membrane. It is found in the cytoplasm. The enzyme catalyses ATP + H2O + cellular proteinSide 1 = ADP + phosphate + cellular proteinSide 2.. Its function is as follows. Part of the Sec protein translocase complex. Interacts with the SecYEG preprotein conducting channel. Has a central role in coupling the hydrolysis of ATP to the transfer of proteins into and across the cell membrane, serving as an ATP-driven molecular motor driving the stepwise translocation of polypeptide chains across the membrane. The polypeptide is Protein translocase subunit SecA 2 (Streptococcus agalactiae serotype III (strain NEM316)).